Reading from the N-terminus, the 416-residue chain is Thyroid hormone receptor alpha-A (416 aa).

Polar residues predominate over residues 1–13 (MEPMSNKQDSNSS). The interval 1–37 (MEPMSNKQDSNSSEGDEKGWPDVPKRKRKNSQCSMKS) is disordered. Positions 1–58 (MEPMSNKQDSNSSEGDEKGWPDVPKRKRKNSQCSMKSMSALSVSVPGYIPSYLEKDEP) are modulating. The segment covering 15–24 (GDEKGWPDVP) has biased composition (basic and acidic residues). 2 consecutive NR C4-type zinc fingers follow at residues 59–79 (CVVC…CEGC) and 97–121 (CKYE…FKKC). Positions 59-126 (CVVCGDKATG…RFKKCISVGM (68 aa)) form a DNA-binding region, nuclear receptor. Residues 169 to 413 (AEWELIRMAT…PPLFLEVFED (245 aa)) enclose the NR LBD domain.

Belongs to the nuclear hormone receptor family. NR1 subfamily.

The protein resides in the nucleus. In terms of biological role, high affinity receptor for triiodothyronine. The polypeptide is Thyroid hormone receptor alpha-A (thra1) (Paralichthys olivaceus (Bastard halibut)).